Consider the following 104-residue polypeptide: MAGKAHRLSAEERDQLLPNLRAVGWNELEGRDAIFKQFHFKDFNRAFGFMTRVALQAEKLDHHPEWFNVYNKVHITLSTHECAGLSERDVNLASFIEQVAVSMT.

Alanine 2 carries the post-translational modification N-acetylalanine. Residues 61-63 (DHH) and 78-81 (STHE) contribute to the substrate site.

The protein belongs to the pterin-4-alpha-carbinolamine dehydratase family. In terms of assembly, homotetramer and homodimer. Heterotetramer with HNF1A; formed by a dimer of dimers. Interacts with HNF1B (via HNF-p1 domain); the interaction increases HNF1B transactivation activity.

The protein localises to the cytoplasm. Its subcellular location is the nucleus. It carries out the reaction (4aS,6R)-4a-hydroxy-L-erythro-5,6,7,8-tetrahydrobiopterin = (6R)-L-erythro-6,7-dihydrobiopterin + H2O. Involved in tetrahydrobiopterin biosynthesis. Seems to both prevent the formation of 7-pterins and accelerate the formation of quinonoid-BH2. Coactivator for HNF1A-dependent transcription. Regulates the dimerization of homeodomain protein HNF1A and enhances its transcriptional activity. Also acts as a coactivator for HNF1B-dependent transcription. The sequence is that of Pterin-4-alpha-carbinolamine dehydratase (PCBD1) from Bos taurus (Bovine).